Reading from the N-terminus, the 759-residue chain is Forkhead box protein M1 (759 aa).

The segment at 1–92 (MRTSPRRPLI…MRLPSNPPQS (92 aa)) is disordered. The span at 48–63 (LAHELEDMAPKSKADQ) shows a compositional bias: basic and acidic residues. Positions 260–358 (RPPYSYMALI…KTASPMSPAD (99 aa)) form a DNA-binding region, fork-head. Disordered regions lie at residues 420 to 450 (AESSDGQQSSKRVKIAPKATADDGESPKHLG), 516 to 535 (SANPNQNLTSHPTQNCPSNV), and 596 to 631 (KEHFSKPTTSSTPSKPTDTGLLQPWESETSLPRDPV). The span at 601 to 612 (KPTTSSTPSKPT) shows a compositional bias: low complexity.

In terms of tissue distribution, localized to the animal hemisphere of early cleavage stage embryos. During neurulation, expressed in the neural folds. Later, expressed in the spinal cord and in the eye field. During tailbud stages, expression is still restricted to the neuroectoderm, predominantly to the hindbrain, the eye and the spinal cord. With ongoing development, expression is also found at lower levels in the branchial arches. At stage 35, expressed in the rhombencephalon and in the eye retina.

It is found in the nucleus. Functionally, transcription factor regulating the expression of cell cycle genes essential for DNA replication and mitosis. Plays a role in the control of cell proliferation. Also plays a role in DNA break repair, participating in the DNA damage checkpoint response. Promotes transcription of PHB2. This is Forkhead box protein M1 from Xenopus laevis (African clawed frog).